The sequence spans 90 residues: Sec-independent protein translocase protein TatA (90 aa).

Residues 1-21 (MGLPGGWELVLIVGVLVLLFG) traverse the membrane as a helical segment. The segment covering 42–60 (EARGMKEDEEAAKREKQAK) has biased composition (basic and acidic residues). Residues 42 to 90 (EARGMKEDEEAAKREKQAKSEPQQLTAGESSAPTVASPVEETQRNDSKK) are disordered. Over residues 61-75 (SEPQQLTAGESSAPT) the composition is skewed to polar residues.

It belongs to the TatA/E family. The Tat system comprises two distinct complexes: a TatABC complex, containing multiple copies of TatA, TatB and TatC subunits, and a separate TatA complex, containing only TatA subunits. Substrates initially bind to the TatABC complex, which probably triggers association of the separate TatA complex to form the active translocon.

It is found in the cell membrane. Part of the twin-arginine translocation (Tat) system that transports large folded proteins containing a characteristic twin-arginine motif in their signal peptide across membranes. TatA could form the protein-conducting channel of the Tat system. The protein is Sec-independent protein translocase protein TatA of Saccharopolyspora erythraea (strain ATCC 11635 / DSM 40517 / JCM 4748 / NBRC 13426 / NCIMB 8594 / NRRL 2338).